The primary structure comprises 312 residues: MSRLSEPSPYVEFDRRQWRALRMSTPLALTEAELIGLRGLGEQIDLLEVEEVFLPLARLLHLQVAARQRLFAATAEFLGEPQQNPDRPVPFIIGVAGSVAVGKSTTARVLQALLARWDHHPRVDLVTTDGFLYPNAELERRNLMHRKGFPESYNRRALMRFVTSVKSGSDYACAPVYSHLHYNIIPGAKQVVRHPDILILEGLNVLQTGPTLMVSDLFDFSLYVDARIEDIEQWYVSRFLAMRSTAFANPESHFHHYSALPDPEAVVAAREIWRTINRPNLVENILPTRPRATLVLRKDADHSIKRLRLRKL.

ATP is bound at residue Gly97–Ser104.

This sequence belongs to the prokaryotic pantothenate kinase family.

It is found in the cytoplasm. It carries out the reaction (R)-pantothenate + ATP = (R)-4'-phosphopantothenate + ADP + H(+). Its pathway is cofactor biosynthesis; coenzyme A biosynthesis; CoA from (R)-pantothenate: step 1/5. This Mycobacterium marinum (strain ATCC BAA-535 / M) protein is Pantothenate kinase.